Reading from the N-terminus, the 229-residue chain is Ras-related protein RABA6b (229 aa).

Residue 20–27 coordinates GTP; it reads GDSAVGKS. The Effector region signature appears at 42–50; sequence SKPTIGVDF. Residues 68 to 72, 126 to 129, and 156 to 157 contribute to the GTP site; these read DTAGQ, NKSD, and SA. S-geranylgeranyl cysteine attachment occurs at residues Cys-226 and Cys-227.

It belongs to the small GTPase superfamily. Rab family.

Its subcellular location is the cell membrane. Its function is as follows. Intracellular vesicle trafficking and protein transport. The polypeptide is Ras-related protein RABA6b (RABA6B) (Arabidopsis thaliana (Mouse-ear cress)).